Here is a 290-residue protein sequence, read N- to C-terminus: MNFQELILALQNYWAKQGCIIQQPYDMEKGAGTFNPATFLRVLGPEPWNVAYVEPSRRPTDGRYGENPNRLQHYYQFQVVMKPSPTNIQELYLDSLKSFGISPSRHDIRFVEDDWESPTLGAWGLGWEVWLDGMEITQFTYFQQVGGIDLKPVSAEITYGCERIAMYLQGVDNVYDLEWIDGIKYGDVHHQSEVEYSTYNFEEADAGMLFNLFDMYEKECSRLAKSQLVLPAYDYVLKASHAFNLLDARGAISVTERAHYIGRVRNLARLCAEGYVAQREKLGFPLIKGR.

The protein belongs to the class-II aminoacyl-tRNA synthetase family. Tetramer of two alpha and two beta subunits.

The protein resides in the cytoplasm. The enzyme catalyses tRNA(Gly) + glycine + ATP = glycyl-tRNA(Gly) + AMP + diphosphate. The protein is Glycine--tRNA ligase alpha subunit of Syntrophotalea carbinolica (strain DSM 2380 / NBRC 103641 / GraBd1) (Pelobacter carbinolicus).